A 464-amino-acid chain; its full sequence is Plant intracellular Ras-group-related LRR protein 3 (464 aa).

The stretch at 106–138 forms a coiled coil; that stretch reads AAVVSLEEVHEGYEKQLRDLEEEIGRVYASAVE. LRR repeat units follow at residues 160–183, 184–206, 207–230, 232–252, 254–275, 276–299, 301–322, 323–347, 348–370, and 372–393; these read GGVV…LGKI, VGLV…ISGL, EKLE…GLLL, LRIL…IAQC, SLVE…FGYG, LLNL…ICEM, SLRY…IGRL, TNLE…ISDL, ANLR…FFRL, and KLEK…MVNQ. A GVYW; degenerate motif is present at residues 398-406; the sequence is VREFMRKRW.

The protein belongs to the SHOC2 family. Widely expressed.

Its function is as follows. Leucine-rich repeat protein that likely mediates protein interactions, possibly in the context of signal transduction. The protein is Plant intracellular Ras-group-related LRR protein 3 (PIRL3) of Arabidopsis thaliana (Mouse-ear cress).